Consider the following 271-residue polypeptide: MKKKLKTFSLILLTGSLLVACGRGEVSSHSATLWEQIVYAFAKSIQWLSFNHSIGLGIILFTLIIRAIMMPLYNMQMKSSQKMQEIQPRLKELQKKYPGKDPDSRLKLNDEMQSMYKAEGVNPYASVLPLLIQLPVLWALFQALTRVSFLKVGTFLSLELSQPDPYYILPVLAALFTFLSTWLTNKAAVEKNIALTLMTYVMPFIILVTSFNFASGVVLYWTVSNAFQVFQILLLNNPYKIIKVREEAVRVAHEKEQRVKRAKRKASKKRK.

The first 20 residues, 1–20, serve as a signal peptide directing secretion; sequence MKKKLKTFSLILLTGSLLVA. Cysteine 21 carries the N-palmitoyl cysteine lipid modification. Residue cysteine 21 is the site of S-diacylglycerol cysteine attachment. The next 4 helical transmembrane spans lie at 45 to 65, 124 to 144, 163 to 183, and 201 to 221; these read IQWL…TLII, YASV…FQAL, PDPY…STWL, and VMPF…VLYW.

The protein belongs to the OXA1/ALB3/YidC family. Type 2 subfamily.

Its subcellular location is the cell membrane. Functionally, required for the insertion and/or proper folding and/or complex formation of integral membrane proteins into the membrane. Involved in integration of membrane proteins that insert both dependently and independently of the Sec translocase complex, as well as at least some lipoproteins. This chain is Membrane protein insertase YidC 1, found in Streptococcus agalactiae serotype III (strain NEM316).